The following is a 542-amino-acid chain: Chaperonin GroEL 2 (542 aa).

ATP-binding positions include 30–33 (TLGP), K51, 87–91 (DGTTT), G415, and D496.

This sequence belongs to the chaperonin (HSP60) family. In terms of assembly, forms a cylinder of 14 subunits composed of two heptameric rings stacked back-to-back. Interacts with the co-chaperonin GroES.

The protein resides in the cytoplasm. It carries out the reaction ATP + H2O + a folded polypeptide = ADP + phosphate + an unfolded polypeptide.. Its function is as follows. Together with its co-chaperonin GroES, plays an essential role in assisting protein folding. The GroEL-GroES system forms a nano-cage that allows encapsulation of the non-native substrate proteins and provides a physical environment optimized to promote and accelerate protein folding. The polypeptide is Chaperonin GroEL 2 (Rhizobium etli (strain ATCC 51251 / DSM 11541 / JCM 21823 / NBRC 15573 / CFN 42)).